A 244-amino-acid chain; its full sequence is MSMLCYTLIIAFLIGIWAAPKSEDNVPLGSPATSDLSDTSCAQTHEGLKTSRNTDQRHPAPKKAEDQELGSVANIIVDPKLFQKRRFQSPRVLFSTQPPPLSRDEQSVEFLDNEDTLNRNIRAKRENHPVHNQGEHSVCDSVSDWVIKTTATDIRGNMVTVMVDINRNNEVYKQYFFETKCRNPNPNPVQSECRGIDSRLWNSYCTTTQTFVRALTMEGNQASWRFIRIDTACVCVIIRKTDNF.

Positions 1–18 are cleaved as a signal peptide; the sequence is MSMLCYTLIIAFLIGIWA. A propeptide spanning residues 19–125 is cleaved from the precursor; the sequence is APKSEDNVPL…TLNRNIRAKR (107 aa). The span at 47 to 66 shows a compositional bias: basic and acidic residues; the sequence is GLKTSRNTDQRHPAPKKAED. The segment at 47–67 is disordered; the sequence is GLKTSRNTDQRHPAPKKAEDQ. Intrachain disulfides connect cysteine 139–cysteine 205, cysteine 181–cysteine 233, and cysteine 193–cysteine 235.

Belongs to the NGF-beta family. In terms of assembly, homodimer; non-covalently linked. As to expression, expressed by the venom gland.

The protein resides in the secreted. In terms of biological role, nerve growth factor is important for the development and maintenance of the sympathetic and sensory nervous systems. It stimulates division and differentiation of sympathetic and embryonic sensory neurons as well as basal forebrain cholinergic neurons in the brain. Its relevance in the snake venom is not clear. However, it has been shown to inhibit metalloproteinase-dependent proteolysis of platelet glycoprotein Ib alpha, suggesting a metalloproteinase inhibition to prevent metalloprotease autodigestion and/or protection against prey proteases. Binds a lipid between the two protein chains in the homodimer. The lipid-bound form promotes histamine relase from mouse mast cells, contrary to the lipid-free form. This chain is Venom nerve growth factor 1, found in Notechis scutatus scutatus (Mainland tiger snake).